Reading from the N-terminus, the 689-residue chain is tRNA wybutosine-synthesizing protein 4 (689 aa).

Positions 1–33 (MTSTSKLDANQLARQRKKLEKDRRKKVYDDQQV) are disordered. The span at 14 to 26 (RQRKKLEKDRRKK) shows a compositional bias: basic residues. S-adenosyl-L-methionine is bound by residues arginine 84, glycine 111, aspartate 137, 183–184 (DL), and glutamate 215.

Belongs to the methyltransferase superfamily. LCMT family.

The catalysed reaction is 7-[(3S)-3-amino-3-carboxypropyl]wyosine(37) in tRNA(Phe) + S-adenosyl-L-methionine = 7-[(3S)-(3-amino-3-methoxycarbonyl)propyl]wyosine(37) in tRNA(Phe) + S-adenosyl-L-homocysteine. It catalyses the reaction 7-[(3S)-(3-amino-3-methoxycarbonyl)propyl]wyosine(37) in tRNA(Phe) + S-adenosyl-L-methionine + CO2 = wybutosine(37) in tRNA(Phe) + S-adenosyl-L-homocysteine + 2 H(+). The protein operates within tRNA modification; wybutosine-tRNA(Phe) biosynthesis. Its function is as follows. Probable S-adenosyl-L-methionine-dependent methyltransferase that acts as a component of the wybutosine biosynthesis pathway. Wybutosine is a hyper modified guanosine with a tricyclic base found at the 3'-position adjacent to the anticodon of eukaryotic phenylalanine tRNA. May methylate the carboxyl group of leucine residues to form alpha-leucine ester residues. The sequence is that of tRNA wybutosine-synthesizing protein 4 (PPM2) from Candida albicans (strain SC5314 / ATCC MYA-2876) (Yeast).